Here is a 197-residue protein sequence, read N- to C-terminus: Nucleoside triphosphate pyrophosphatase (197 aa).

Residue Asp-71 is the Proton acceptor of the active site.

This sequence belongs to the Maf family. It depends on a divalent metal cation as a cofactor.

It is found in the cytoplasm. It carries out the reaction a ribonucleoside 5'-triphosphate + H2O = a ribonucleoside 5'-phosphate + diphosphate + H(+). It catalyses the reaction a 2'-deoxyribonucleoside 5'-triphosphate + H2O = a 2'-deoxyribonucleoside 5'-phosphate + diphosphate + H(+). Nucleoside triphosphate pyrophosphatase. May have a dual role in cell division arrest and in preventing the incorporation of modified nucleotides into cellular nucleic acids. The sequence is that of Nucleoside triphosphate pyrophosphatase from Synechococcus sp. (strain JA-3-3Ab) (Cyanobacteria bacterium Yellowstone A-Prime).